A 148-amino-acid polypeptide reads, in one-letter code: uncharacterized protein (148 aa).

This is an uncharacterized protein from Bos taurus (Bovine).